We begin with the raw amino-acid sequence, 553 residues long: MANVIKTVLTYQLDGSNRDFNIPFEYLARKFVVVTLIGVDRKVLTINTDYRFATRTTISLTKAWGPADGYTTIELRRVTSTTDRLVDFTDGSILRAYDLNVAQIQTMHVAEEARDLTTDTIGVNNDGHLDARGRRIVNLANAVDDRDAVPFGQLKTMNQNSWQARNEALQFRNEAETFRNQAEGFKNESSTNATNTKQWRDETKGFRDEAKRFKNTAGQYATSAGNSASAAHQSEVNAENSATASANSAHLAEQQADRAEREADKLENYNGLAGAIDKVDGTNVYWKGNIHANGRLYMTTNGFDCGQYQQFFGGVTNRYSVMEWGDENGWLMYVQRREWTTAIGGNIQLVVNGQIITQGGAMTGQLKLQNGHVLQLESASDKAHYILSKDGNRNNWYIGRGSDNNNDCTFHSYVHGTTLTLKQDYAVVNKHFHVGQAVVATDGNIQGTKWGGKWLDAYLRDSFVAKSKAWTQVWSGSAGGGVSVTVSQDLRFRNIWIKCANNSWNFFRTGPDGIYFIASDGGWLRFQIHSNGLGFKNIADSRSVPNAIMVENE.

Disordered regions lie at residues 180-204 (NQAE…DETK) and 224-261 (AGNS…RAER). The span at 187–197 (NESSTNATNTK) shows a compositional bias: polar residues. Over residues 234–254 (SEVNAENSATASANSAHLAEQ) the composition is skewed to low complexity.

It belongs to the Teseptimavirus fiber family. In terms of assembly, homotrimer. Interacts with tail components gp11 and gp12.

The protein resides in the virion. Functionally, structural component of the short non-contractile tail. The tail comprises six fibers made of gp17 trimers, 2 nm in diameter and 32 nm in length. May attach to host lipopolysaccharides (LPS) to mediate primary attachment to the host cell. The chain is Tail fiber protein from Escherichia phage T7 (Bacteriophage T7).